A 286-amino-acid chain; its full sequence is Acyl-CoA thioesterase 2 (286 aa).

Catalysis depends on charge relay system residues aspartate 204, threonine 228, and glutamine 278.

Belongs to the C/M/P thioester hydrolase family. As to quaternary structure, homotetramer.

It carries out the reaction a fatty acyl-CoA + H2O = a fatty acid + CoA + H(+). In terms of biological role, thioesterase that has relatively broad substrate specificity, hydrolyzing primarily medium- and long-chain acyl-CoA substrates to free fatty acids and CoA. This is Acyl-CoA thioesterase 2 (tesB) from Haemophilus influenzae (strain ATCC 51907 / DSM 11121 / KW20 / Rd).